Reading from the N-terminus, the 363-residue chain is Cytoplasmic tRNA 2-thiolation protein 1 (363 aa).

The interval 337–363 is disordered; that stretch reads DGDCEQQATRSERNRSSLQGKHGNFDF.

The protein belongs to the TtcA family. CTU1/NCS6/ATPBD3 subfamily.

It is found in the cytoplasm. The protein operates within tRNA modification; 5-methoxycarbonylmethyl-2-thiouridine-tRNA biosynthesis. Functionally, plays a central role in 2-thiolation of mcm(5)S(2)U at tRNA wobble positions of tRNA(Lys), tRNA(Glu) and tRNA(Gln). Directly binds tRNAs and probably acts by catalyzing adenylation of tRNAs, an intermediate required for 2-thiolation. It is unclear whether it acts as a sulfurtransferase that transfers sulfur from thiocarboxylated URM1 onto the uridine of tRNAs at wobble position. The protein is Cytoplasmic tRNA 2-thiolation protein 1 of Oryza sativa subsp. japonica (Rice).